A 156-amino-acid chain; its full sequence is Small ribosomal subunit protein uS7 (156 aa).

It belongs to the universal ribosomal protein uS7 family. Part of the 30S ribosomal subunit. Contacts proteins S9 and S11.

Functionally, one of the primary rRNA binding proteins, it binds directly to 16S rRNA where it nucleates assembly of the head domain of the 30S subunit. Is located at the subunit interface close to the decoding center, probably blocks exit of the E-site tRNA. This Bradyrhizobium diazoefficiens (strain JCM 10833 / BCRC 13528 / IAM 13628 / NBRC 14792 / USDA 110) protein is Small ribosomal subunit protein uS7.